The primary structure comprises 393 residues: S-adenosylmethionine synthase 2 (393 aa).

Glutamate 9 contacts Mg(2+). Residue histidine 15 coordinates ATP. Glutamate 43 contributes to the K(+) binding site. L-methionine-binding residues include glutamate 56 and glutamine 99. Residues 167–169, 235–238, aspartate 246, 252–253, alanine 269, lysine 273, and lysine 277 each bind ATP; these read DGK, SGRF, and RK. Aspartate 246 contacts L-methionine. Lysine 277 contributes to the L-methionine binding site.

It belongs to the AdoMet synthase family. In terms of assembly, homotetramer. Mn(2+) is required as a cofactor. Requires Mg(2+) as cofactor. Co(2+) serves as cofactor. It depends on K(+) as a cofactor.

It localises to the cytoplasm. The enzyme catalyses L-methionine + ATP + H2O = S-adenosyl-L-methionine + phosphate + diphosphate. It participates in amino-acid biosynthesis; S-adenosyl-L-methionine biosynthesis; S-adenosyl-L-methionine from L-methionine: step 1/1. Functionally, catalyzes the formation of S-adenosylmethionine from methionine and ATP. The reaction comprises two steps that are both catalyzed by the same enzyme: formation of S-adenosylmethionine (AdoMet) and triphosphate, and subsequent hydrolysis of the triphosphate. The sequence is that of S-adenosylmethionine synthase 2 (METK2) from Populus trichocarpa (Western balsam poplar).